Here is a 144-residue protein sequence, read N- to C-terminus: Urease subunit beta (144 aa).

Positions 110–119 are enriched in low complexity; the sequence is HAAPAAPAIP. Residues 110–144 are disordered; sequence HAAPAAPAIPARHESAAGDAPSPLKERAGFDNETR. The span at 133–144 shows a compositional bias: basic and acidic residues; the sequence is LKERAGFDNETR.

It belongs to the urease beta subunit family. As to quaternary structure, heterotrimer of UreA (gamma), UreB (beta) and UreC (alpha) subunits. Three heterotrimers associate to form the active enzyme.

It is found in the cytoplasm. It catalyses the reaction urea + 2 H2O + H(+) = hydrogencarbonate + 2 NH4(+). It functions in the pathway nitrogen metabolism; urea degradation; CO(2) and NH(3) from urea (urease route): step 1/1. The protein is Urease subunit beta of Micrococcus luteus (strain ATCC 4698 / DSM 20030 / JCM 1464 / CCM 169 / CCUG 5858 / IAM 1056 / NBRC 3333 / NCIMB 9278 / NCTC 2665 / VKM Ac-2230) (Micrococcus lysodeikticus).